The chain runs to 601 residues: Elongation factor 4 (601 aa).

The tr-type G domain maps to 7-189; sequence RNIRNFSIIA…AIVHRIPPPA (183 aa). Residues 19 to 24 and 136 to 139 contribute to the GTP site; these read DHGKST and NKID.

The protein belongs to the TRAFAC class translation factor GTPase superfamily. Classic translation factor GTPase family. LepA subfamily.

The protein localises to the cell inner membrane. It catalyses the reaction GTP + H2O = GDP + phosphate + H(+). In terms of biological role, required for accurate and efficient protein synthesis under certain stress conditions. May act as a fidelity factor of the translation reaction, by catalyzing a one-codon backward translocation of tRNAs on improperly translocated ribosomes. Back-translocation proceeds from a post-translocation (POST) complex to a pre-translocation (PRE) complex, thus giving elongation factor G a second chance to translocate the tRNAs correctly. Binds to ribosomes in a GTP-dependent manner. The polypeptide is Elongation factor 4 (Xanthomonas oryzae pv. oryzae (strain MAFF 311018)).